The sequence spans 225 residues: tRNA 2'-phosphotransferase 1 (225 aa).

Positions 1-21 are disordered; sequence MDCETRGRGRRGRGNRNEESR.

Belongs to the KptA/TPT1 family.

It catalyses the reaction 2'-phospho-[ligated tRNA] + NAD(+) = mature tRNA + ADP-alpha-D-ribose 1'',2''-cyclic phosphate + nicotinamide. Catalyzes the last step of tRNA splicing, the transfer of the splice junction 2'-phosphate from ligated tRNA to NAD to produce ADP-ribose 1''-2'' cyclic phosphate. In Danio rerio (Zebrafish), this protein is tRNA 2'-phosphotransferase 1 (trpt1).